Reading from the N-terminus, the 1462-residue chain is Glucosyltransferase-S (1462 aa).

Residues 35-164 form a disordered region; it reads SSVSAETEQQ…RQTAAQENKN (130 aa). The span at 37-52 shows a compositional bias: polar residues; that stretch reads VSAETEQQTSDKVVTQ. A compositionally biased stretch (low complexity) spans 71–85; sequence TKQAQTEQTQAQSQA. Over residues 86–108 the composition is skewed to polar residues; that stretch reads NVADTSTSITKETPSQNITTQAN. Residues 109 to 133 are compositionally biased toward basic and acidic residues; it reads SDDKTVTNTKSEEAQTSEERTKQAE. Over residues 134–149 the composition is skewed to low complexity; that stretch reads EAQATASSQALTQAKA. Residues 154-163 show a composition bias toward polar residues; it reads QRQTAAQENK. Cell wall-binding repeat units follow at residues 171–190, 192–211, 1095–1115, 1116–1136, 1137–1156, 1180–1201, 1202–1221, 1223–1244, 1246–1266, 1267–1286, 1310–1330, 1331–1350, 1352–1372, and 1374–1394; these read IPNV…DGQP, KNFA…NTGA, STGF…GYQA, KNSF…NGHM, VYGL…NGVQ, SNGY…SGVM, AVGL…DGYQ, KGAW…SGNM, VNRF…DGIA, LVGV…DGKQ, RNIF…DGVA, VTGS…DGKQ, KGSF…SGEL, and VNRF…NGEA.

Belongs to the glycosyl hydrolase 70 family.

It localises to the secreted. The enzyme catalyses [(1-&gt;6)-alpha-D-glucosyl](n) + sucrose = [(1-&gt;6)-alpha-D-glucosyl](n+1) + D-fructose. Production of extracellular glucans, that are thought to play a key role in the development of the dental plaque because of their ability to adhere to smooth surfaces and mediate the aggregation of bacterial cells and food debris. The polypeptide is Glucosyltransferase-S (gtfD) (Streptococcus mutans serotype c (strain ATCC 700610 / UA159)).